Reading from the N-terminus, the 171-residue chain is Nucleoside-triphosphatase THEP1 (171 aa).

ATP contacts are provided by residues 8–15 (GPPGAGKS) and 95–102 (VYLIDEIG).

Belongs to the THEP1 NTPase family.

The catalysed reaction is a ribonucleoside 5'-triphosphate + H2O = a ribonucleoside 5'-diphosphate + phosphate + H(+). In terms of biological role, has nucleotide phosphatase activity towards ATP, GTP, CTP, TTP and UTP. May hydrolyze nucleoside diphosphates with lower efficiency. The chain is Nucleoside-triphosphatase THEP1 from Ignicoccus hospitalis (strain KIN4/I / DSM 18386 / JCM 14125).